The following is a 335-amino-acid chain: AA9 family lytic polysaccharide monooxygenase A (335 aa).

Residues 1–21 (MSSFITKTVLAALVAAAGVRA) form the signal peptide. Cu(2+) contacts are provided by H22 and H107. An intrachain disulfide couples C77 to C196. Residues H182 and Q191 each coordinate O2. Position 193 (Y193) interacts with Cu(2+). The disordered stretch occupies residues 241–335 (PKMNIAGGSS…ARRHARDMMN (95 aa)). Positions 251-303 (GAAPSTPATPTTGSGSDTPSNTAAPVESAPAESAAPVESAPAAGNGNQNNGGA) are enriched in low complexity. Residues 321–335 (CKAKKARRHARDMMN) show a composition bias toward basic residues.

This sequence belongs to the polysaccharide monooxygenase AA9 family. Cu(2+) serves as cofactor.

It localises to the secreted. It carries out the reaction [(1-&gt;4)-beta-D-glucosyl]n+m + reduced acceptor + O2 = 4-dehydro-beta-D-glucosyl-[(1-&gt;4)-beta-D-glucosyl]n-1 + [(1-&gt;4)-beta-D-glucosyl]m + acceptor + H2O.. Lytic polysaccharide monooxygenase (LPMO) that depolymerizes crystalline and amorphous polysaccharides via the oxidation of scissile alpha- or beta-(1-4)-glycosidic bonds, yielding C1 or C4 oxidation products. Catalysis by LPMOs requires the reduction of the active-site copper from Cu(II) to Cu(I) by a reducing agent and H(2)O(2) or O(2) as a cosubstrate. Is capable of cleaving cellulose, but not chitin. Is also active on tamarind xyloglucan and longer xyloglucan oligosaccharides. Has no activity toward shorter cellooligosaccharides (Glc3-6), as well as toward the xyloglucan-heptamer, birchwood xylan, wheat arabinoxylan, konjac glucomannan, ivory nut mannan, beta-glucan from barley, lichenan from Icelandic moss, starch, and spruce galactoglucomannan. Has unprecedented broad specificity on xyloglucan, cleaving any glycosidicbond in theb-glucan main chain, regardless of xylosyl substitutions. When incubated with a mixture of xyloglucan and cellulose, efficiently attacks the xyloglucan, whereas cellulose conversion is inhibited, suggesting that removal of hemicellulose may be the true function of this LPMO during biomass conversion. This chain is AA9 family lytic polysaccharide monooxygenase A, found in Gibberella zeae (strain ATCC MYA-4620 / CBS 123657 / FGSC 9075 / NRRL 31084 / PH-1) (Wheat head blight fungus).